Consider the following 285-residue polypeptide: Baculoviral IAP repeat-containing protein 7 (285 aa).

Residues 18–47 (ESRARDSVRGPELSHREDGSGRTQEQDKPH) are disordered. Over residues 19–47 (SRARDSVRGPELSHREDGSGRTQEQDKPH) the composition is skewed to basic and acidic residues. The stretch at 96-161 (RLASFYDWPS…RWFPRCQFLL (66 aa)) is one BIR repeat. Cysteine 130, cysteine 133, histidine 150, and cysteine 157 together coordinate Zn(2+). Positions 184–225 (QREEPEDAVSATPSAPAHGSPELLRSRRETQPEDVSEPGAKD) are disordered. The RING-type zinc-finger motif lies at 239 to 273 (CKVCLDRAVSIVFVPCGHFVCTECAPNLQLCPICR).

The protein belongs to the IAP family. As to quaternary structure, binds to caspase-9. Interaction with DIABLO/SMAC via the BIR domain disrupts binding to caspase-9 and apoptotic suppressor activity. Interacts with TAB1. In vitro, interacts with caspase-3 and caspase-7 via its BIR domain. In terms of processing, autoubiquitinated and undergoes proteasome-mediated degradation. Post-translationally, the truncated protein (tLivin) not only loses its anti-apoptotic effect but also acquires a pro-apoptotic effect.

It localises to the nucleus. The protein resides in the cytoplasm. Its subcellular location is the golgi apparatus. The catalysed reaction is S-ubiquitinyl-[E2 ubiquitin-conjugating enzyme]-L-cysteine + [acceptor protein]-L-lysine = [E2 ubiquitin-conjugating enzyme]-L-cysteine + N(6)-ubiquitinyl-[acceptor protein]-L-lysine.. Its function is as follows. Apoptotic regulator capable of exerting proapoptotic and anti-apoptotic activities and plays crucial roles in apoptosis, cell proliferation, and cell cycle control. Its anti-apoptotic activity is mediated through the inhibition of CASP3, CASP7 and CASP9, as well as by its E3 ubiquitin-protein ligase activity. As it is a weak caspase inhibitor, its anti-apoptotic activity is thought to be due to its ability to ubiquitinate DIABLO/SMAC targeting it for degradation thereby promoting cell survival. May contribute to caspase inhibition, by blocking the ability of DIABLO/SMAC to disrupt XIAP/BIRC4-caspase interactions. Protects against apoptosis induced by TNF or by chemical agents such as adriamycin, etoposide or staurosporine. Suppression of apoptosis is mediated by activation of MAPK8/JNK1, and possibly also of MAPK9/JNK2. This activation depends on TAB1 and MAP3K7/TAK1. In vitro, inhibits CASP3 and proteolytic activation of pro-CASP9. The sequence is that of Baculoviral IAP repeat-containing protein 7 (Birc7) from Mus musculus (Mouse).